Consider the following 518-residue polypeptide: MDTMSNSQQNKGIGRKVQAFGSFLSSMIMPNIGAFIAWGFIAAIFIDNGWFPNKDLAQLAGPMITYLIPLLIAFSGGRLIHDLRGGIIAATATMGVIVALPDTPMLLGAMIMGPLVGWLMKKTDEFVQPRTPQGFEMLFNNFSAGILGFIMTIFGFEVLAPIMKFIMHILSVGVEALVHAHLLPLVSILVEPAKIVFLNNAINHGVFTPLGADQAAHAGQSILYTIESNPGPGIGVLIAYMIFGKGTAKATSYGAGIIQFFGGIHEIYFPYVLMRPLLFVSVILGGMTGVATYSLLDFGFKTPASPGSIIVYAINAPKGEFLHMLTGVVLAALVSFVVSALILKFTKDPKQDLAEATAQMEATKGKKSSVASKLSAKDDNKAADNKTAETTTATAASNKAEDKDSDELLDDYNTEDVDAHNYNNVDHVIFACDAGMGSSAMGASMLRNKFKNAGLENIQVTNTAINQLPKNAQLVITQKKLTDRAIKQSPDAIHISVENFLNSPRYEELINNLKEDQD.

At 1 to 31 (MDTMSNSQQNKGIGRKVQAFGSFLSSMIMPN) the chain is on the cytoplasmic side. Residues 20-352 (FGSFLSSMIM…LKFTKDPKQD (333 aa)) enclose the PTS EIIC type-2 domain. Residues 32-53 (IGAFIAWGFIAAIFIDNGWFPN) form a helical membrane-spanning segment. Residues 54–57 (KDLA) lie on the Extracellular side of the membrane. Residues 58–78 (QLAGPMITYLIPLLIAFSGGR) form a helical membrane-spanning segment. Residues 79-142 (LIHDLRGGII…QGFEMLFNNF (64 aa)) lie on the Cytoplasmic side of the membrane. The helical transmembrane segment at 143–164 (SAGILGFIMTIFGFEVLAPIMK) threads the bilayer. Residues 165–173 (FIMHILSVG) are Extracellular-facing. The helical transmembrane segment at 174-194 (VEALVHAHLLPLVSILVEPAK) threads the bilayer. The Cytoplasmic segment spans residues 195–281 (IVFLNNAINH…VLMRPLLFVS (87 aa)). Residues 282–301 (VILGGMTGVATYSLLDFGFK) traverse the membrane as a helical segment. Residues 302-321 (TPASPGSIIVYAINAPKGEF) are Extracellular-facing. Residues 322-343 (LHMLTGVVLAALVSFVVSALIL) traverse the membrane as a helical segment. Over 344–518 (KFTKDPKQDL…LINNLKEDQD (175 aa)) the chain is Cytoplasmic. The disordered stretch occupies residues 369 to 406 (SVASKLSAKDDNKAADNKTAETTTATAASNKAEDKDSD). A compositionally biased stretch (basic and acidic residues) spans 375–387 (SAKDDNKAADNKT). A compositionally biased stretch (low complexity) spans 388–398 (AETTTATAASN). Positions 426 to 518 (DHVIFACDAG…LINNLKEDQD (93 aa)) constitute a PTS EIIB type-2 domain. Residue Cys432 is the Phosphocysteine intermediate of the active site. Cys432 carries the post-translational modification Phosphocysteine; by EIIA.

In terms of assembly, homodimer.

The protein localises to the cell membrane. The catalysed reaction is D-mannitol(out) + N(pros)-phospho-L-histidyl-[protein] = D-mannitol 1-phosphate(in) + L-histidyl-[protein]. Functionally, the phosphoenolpyruvate-dependent sugar phosphotransferase system (sugar PTS), a major carbohydrate active transport system, catalyzes the phosphorylation of incoming sugar substrates concomitantly with their translocation across the cell membrane. The enzyme II CmtAB PTS system is involved in D-mannitol transport. This is PTS system mannitol-specific EIICB component from Staphylococcus carnosus.